A 123-amino-acid chain; its full sequence is MQIASITRRGFLKVACVTTGAALIGIRMTGKAVAAVKQIKDYMLDRINGVYGADAKFPVRASQDNTQVKALYKSYLEKPLGHKSHDLLHTHWFDKSKGVKELTTAGKLPNPRASEFEGPYPYE.

Residues 1–34 constitute a signal peptide (tat-type signal); sequence MQIASITRRGFLKVACVTTGAALIGIRMTGKAVA. The interval 103–123 is disordered; it reads TTAGKLPNPRASEFEGPYPYE.

In terms of assembly, heterodimer of a large and a small subunit. In terms of processing, predicted to be exported by the Tat system. The position of the signal peptide cleavage has been experimentally proven.

It is found in the periplasm. The enzyme catalyses H2 + 2 oxidized [2Fe-2S]-[ferredoxin] = 2 reduced [2Fe-2S]-[ferredoxin] + 2 H(+). Functionally, may be involved in hydrogen uptake for the reduction of sulfate to hydrogen sulfide in an electron transport chain. Cytochrome c3 is likely to be the physiological electron carrier for the enzyme. This Nitratidesulfovibrio vulgaris (strain ATCC 29579 / DSM 644 / CCUG 34227 / NCIMB 8303 / VKM B-1760 / Hildenborough) (Desulfovibrio vulgaris) protein is Periplasmic [Fe] hydrogenase small subunit (hydB).